Consider the following 269-residue polypeptide: Tryptophan synthase alpha chain (269 aa).

Active-site proton acceptor residues include Glu-50 and Asp-61.

It belongs to the TrpA family. As to quaternary structure, tetramer of two alpha and two beta chains.

The catalysed reaction is (1S,2R)-1-C-(indol-3-yl)glycerol 3-phosphate + L-serine = D-glyceraldehyde 3-phosphate + L-tryptophan + H2O. Its pathway is amino-acid biosynthesis; L-tryptophan biosynthesis; L-tryptophan from chorismate: step 5/5. Functionally, the alpha subunit is responsible for the aldol cleavage of indoleglycerol phosphate to indole and glyceraldehyde 3-phosphate. The polypeptide is Tryptophan synthase alpha chain (Buchnera aphidicola subsp. Baizongia pistaciae (strain Bp)).